The following is a 385-amino-acid chain: Acetate kinase (385 aa).

Asparagine 9 contacts Mg(2+). ATP is bound at residue lysine 16. Position 87 (arginine 87) interacts with substrate. The active-site Proton donor/acceptor is the aspartate 144. Residues histidine 202–glycine 206 and aspartate 277–arginine 279 each bind ATP. Glutamate 373 serves as a coordination point for Mg(2+).

It belongs to the acetokinase family. In terms of assembly, homodimer. The cofactor is Mg(2+). Requires Mn(2+) as cofactor.

The protein localises to the cytoplasm. The enzyme catalyses acetate + ATP = acetyl phosphate + ADP. It participates in metabolic intermediate biosynthesis; acetyl-CoA biosynthesis; acetyl-CoA from acetate: step 1/2. Functionally, catalyzes the formation of acetyl phosphate from acetate and ATP. Can also catalyze the reverse reaction. This Rickettsia prowazekii (strain Madrid E) protein is Acetate kinase.